A 1026-amino-acid polypeptide reads, in one-letter code: MRFFALFIYRPVATILIAAAITLCGILGFRLLPVAPLPQVDFPVIMVSASLPGASPETMASSVATPLERSLGRIAGVNEMTSSSSLGSTRIILEFNFDRDINGAARDVQAAINAAQSLLPGGMPSRPTYRKANPSDAPIMILTLTSESWSQGKLYDFASTQLAQTIAQIDGVGDVDVGGSSLPAVRVGLNPQALFNQGVSLDEVREAIDSANVRRPQGAIEDSVHRWQIQTNDELKTAAEYQPLIIHYNNGAAVRLGDVASVTDSVQDVRNAGMTNAKPAILLMIRKLPEANIIQTVDGIRAKLPELRAMIPAAIDLQIAQDRSPTIRASLQEVEETLAISVALVILVVFLFLRSGRATLIPAVAVPVSLIGTFAAMYLCGFSLNNLSLMALTIATGFVVDDAIVVLENIARHLEARMKPLQAALQGTREVGFTVISMSLSLVAVFLPLLLMGGLPGRLLREFAVTLSVAIGISLVVSLTLTPMMCGWMLKSSKPRTQPRKRGVGRLLVALQQGYGTSLKWVLNHTRLVGVVFLGTVALNIWLYIAIPKTFFPEQDTGVLMGGIQADQSISFQAMRGKLQDFMKIIRDDPAVNNVTGFTGGSRVNSGMMFITLKPRGERKETAQQVIDRLRVKLAKEPGAKLFLMAVQDIRVGGRQANASYQYTLLSDSLPALREWEPKIRKALSALPQLADVNSDQQDNGAEMNLIYDRDTMSRLGIDVQAANSLLNNAFGQRQISTIYQPMNQYKVVMEVDPRYSQDISALEKMFVINRDGKAIPLSYFAQWRPANAPLSVNHQGLSAASTIAFNLPTGTSLSQATEAIDRTMTQLGVPSTVRGSFSGTAQVFQQTMNSQLILIVAAIATVYIVLGILYESYVHPLTILSTLPSAGVGALLALELFNAPFSLIALIGIMLLIGIVKKNAIMMVDFALEAQRSGGLTPEQAIFQACLLRFRPIMMTTLAALFGALPLVLSGGDGSELRQPLGITIVGGLVMSQLLTLYTTPVVYLFFDRLRLRFSRKNSKPVVEI.

Topologically, residues 1–6 (MRFFAL) are cytoplasmic. Residues 7 to 29 (FIYRPVATILIAAAITLCGILGF) traverse the membrane as a helical segment. Over 30–335 (RLLPVAPLPQ…TIRASLQEVE (306 aa)) the chain is Periplasmic. The helical transmembrane segment at 336–353 (ETLAISVALVILVVFLFL) threads the bilayer. Residues 354–359 (RSGRAT) lie on the Cytoplasmic side of the membrane. A helical membrane pass occupies residues 360–379 (LIPAVAVPVSLIGTFAAMYL). Residues 380 to 388 (CGFSLNNLS) are Periplasmic-facing. Residues 389-411 (LMALTIATGFVVDDAIVVLENIA) form a helical membrane-spanning segment. The Cytoplasmic segment spans residues 412-430 (RHLEARMKPLQAALQGTRE). Residues 431-453 (VGFTVISMSLSLVAVFLPLLLMG) traverse the membrane as a helical segment. Residues 454 to 467 (GLPGRLLREFAVTL) lie on the Periplasmic side of the membrane. Residues 468–490 (SVAIGISLVVSLTLTPMMCGWML) traverse the membrane as a helical segment. At 491–852 (KSSKPRTQPR…QVFQQTMNSQ (362 aa)) the chain is on the cytoplasmic side. Residues 853–875 (LILIVAAIATVYIVLGILYESYV) traverse the membrane as a helical segment. Topologically, residues 876–894 (HPLTILSTLPSAGVGALLA) are periplasmic. The chain crosses the membrane as a helical span at residues 895-917 (LELFNAPFSLIALIGIMLLIGIV). At 918–947 (KKNAIMMVDFALEAQRSGGLTPEQAIFQAC) the chain is on the cytoplasmic side. Residues 948 to 970 (LLRFRPIMMTTLAALFGALPLVL) traverse the membrane as a helical segment. Over 971–984 (SGGDGSELRQPLGI) the chain is Periplasmic. A helical membrane pass occupies residues 985 to 1007 (TIVGGLVMSQLLTLYTTPVVYLF). The Cytoplasmic portion of the chain corresponds to 1008–1026 (FDRLRLRFSRKNSKPVVEI).

It belongs to the resistance-nodulation-cell division (RND) (TC 2.A.6) family. MdtC subfamily. Part of a tripartite efflux system composed of MdtA, MdtB and MdtC. MdtC forms a heteromultimer with MdtB.

Its subcellular location is the cell inner membrane. The chain is Multidrug resistance protein MdtC from Salmonella typhi.